The primary structure comprises 120 residues: PYEKIGAELVKEVAKKTDDVAGDGTTTATVLAQALVREGLRNVAAGANPLGLKRGIEKAVEKITETLLKSAKEVETKDQIAATAAISAGDLQIGELIAEAMDKVGNEGVITVEESQTFGL.

23 to 27 contacts ATP; the sequence is DGTTT.

The protein belongs to the chaperonin (HSP60) family. In terms of assembly, forms a cylinder of 14 subunits composed of two heptameric rings stacked back-to-back. Interacts with the co-chaperonin GroES.

It is found in the cytoplasm. It catalyses the reaction ATP + H2O + a folded polypeptide = ADP + phosphate + an unfolded polypeptide.. In terms of biological role, together with its co-chaperonin GroES, plays an essential role in assisting protein folding. The GroEL-GroES system forms a nano-cage that allows encapsulation of the non-native substrate proteins and provides a physical environment optimized to promote and accelerate protein folding. In Mycolicibacterium pulveris (Mycobacterium pulveris), this protein is Chaperonin GroEL.